Here is a 456-residue protein sequence, read N- to C-terminus: Arginine biosynthesis bifunctional protein ArgJ, mitochondrial (456 aa).

Substrate contacts are provided by T184, K213, T224, E311, N451, and T456. The active-site Nucleophile is the T224.

This sequence belongs to the ArgJ family. Heterodimer of an alpha and a beta chain. In terms of processing, the alpha and beta chains are autoproteolytically processed from a single precursor protein within the mitochondrion.

Its subcellular location is the mitochondrion matrix. The enzyme catalyses N(2)-acetyl-L-ornithine + L-glutamate = N-acetyl-L-glutamate + L-ornithine. It carries out the reaction L-glutamate + acetyl-CoA = N-acetyl-L-glutamate + CoA + H(+). The protein operates within amino-acid biosynthesis; L-arginine biosynthesis; L-ornithine and N-acetyl-L-glutamate from L-glutamate and N(2)-acetyl-L-ornithine (cyclic): step 1/1. It participates in amino-acid biosynthesis; L-arginine biosynthesis; N(2)-acetyl-L-ornithine from L-glutamate: step 1/4. Its function is as follows. Catalyzes two activities which are involved in the cyclic version of arginine biosynthesis: the synthesis of acetylglutamate from glutamate and acetyl-CoA, and of ornithine by transacetylation between acetylornithine and glutamate. The protein is Arginine biosynthesis bifunctional protein ArgJ, mitochondrial of Aspergillus oryzae (strain ATCC 42149 / RIB 40) (Yellow koji mold).